A 341-amino-acid polypeptide reads, in one-letter code: Small ribosomal subunit biogenesis GTPase RsgA (341 aa).

The 157-residue stretch at 112 to 268 folds into the CP-type G domain; the sequence is RQQLIAANLD…LIDTPGMREL (157 aa). Residues 157–160 and 210–218 each bind GTP; these read TKVD and GSSGAGKST. Residues Cys-290, Cys-295, His-297, and Cys-303 each coordinate Zn(2+).

The protein belongs to the TRAFAC class YlqF/YawG GTPase family. RsgA subfamily. As to quaternary structure, monomer. Associates with 30S ribosomal subunit, binds 16S rRNA. The cofactor is Zn(2+).

Its subcellular location is the cytoplasm. One of several proteins that assist in the late maturation steps of the functional core of the 30S ribosomal subunit. Helps release RbfA from mature subunits. May play a role in the assembly of ribosomal proteins into the subunit. Circularly permuted GTPase that catalyzes slow GTP hydrolysis, GTPase activity is stimulated by the 30S ribosomal subunit. The chain is Small ribosomal subunit biogenesis GTPase RsgA from Xylella fastidiosa (strain Temecula1 / ATCC 700964).